The sequence spans 1001 residues: Serine/threonine-protein kinase TAO1-B (1001 aa).

Residues 28-281 form the Protein kinase domain; it reads FSDLREIGHG…SDELLKHMFV (254 aa). Residues 34 to 42 and Lys57 each bind ATP; that span reads IGHGSFGAV. Catalysis depends on Asp151, which acts as the Proton acceptor. Disordered regions lie at residues 324 to 435 and 567 to 586; these read PAVE…YRNR and KEEL…EWLS. Residues 350-370 show a composition bias toward low complexity; it reads SNQSIPSMSISASSQSSSVNS. 2 stretches are compositionally biased toward basic and acidic residues: residues 375–388 and 577–586; these read SDDK…EGDH and PKKEKQEWLS. Coiled coils occupy residues 458-651 and 754-877; these read SELR…EHAM and KAVL…EIEA. Residues 911 to 1001 form a disordered region; the sequence is SHNPTGGPGP…ISNGSHMSYT (91 aa). The segment covering 921–930 has biased composition (low complexity); it reads HWGHPMAGPP. 2 stretches are compositionally biased toward polar residues: residues 949–967 and 975–1001; these read GSVQ…NSPQ and GGRT…MSYT.

It belongs to the protein kinase superfamily. STE Ser/Thr protein kinase family. STE20 subfamily.

It localises to the cytoplasm. The catalysed reaction is L-seryl-[protein] + ATP = O-phospho-L-seryl-[protein] + ADP + H(+). The enzyme catalyses L-threonyl-[protein] + ATP = O-phospho-L-threonyl-[protein] + ADP + H(+). Serine/threonine-protein kinase involved in various processes such as p38/mapk14 stress-activated MAPK cascade, DNA damage response and regulation of cytoskeleton stability. Acts as an activator of the p38/MAPK14 stress-activated MAPK cascade by mediating phosphorylation and subsequent activation of upstream MAP kinase kinases. In response to DNA damage, involved in the G2/M transition DNA damage checkpoint by activating the p38/MAPK14 stress-activated MAPK cascade. This is Serine/threonine-protein kinase TAO1-B (taok1-b) from Xenopus laevis (African clawed frog).